Reading from the N-terminus, the 88-residue chain is RQC P-site tRNA stabilizing factor (88 aa).

Residues methionine 1 to valine 67 form the S4 RNA-binding domain.

The protein belongs to the RqcP family. As to quaternary structure, associates with stalled 50S ribosomal subunits. Binds to RqcH, 23S rRNA and the P-site tRNA. Does not require RqcH for association with 50S subunits.

In terms of biological role, key component of the ribosome quality control system (RQC), a ribosome-associated complex that mediates the extraction of incompletely synthesized nascent chains from stalled ribosomes and their subsequent degradation. RqcH recruits Ala-charged tRNA, and with RqcP directs the elongation of stalled nascent chains on 50S ribosomal subunits, leading to non-templated C-terminal alanine extensions (Ala tail). The Ala tail promotes nascent chain degradation. RqcP is associated with the translocation-like movement of the peptidyl-tRNA from the A-site into the P-site. This chain is RQC P-site tRNA stabilizing factor, found in Halalkalibacterium halodurans (strain ATCC BAA-125 / DSM 18197 / FERM 7344 / JCM 9153 / C-125) (Bacillus halodurans).